We begin with the raw amino-acid sequence, 235 residues long: Large ribosomal subunit protein uL4 (235 aa).

Residues 45 to 75 form a disordered region; it reads RAGTASTKTRGEVSGGGRKPWPQKHTGRARH. Over residues 65–75 the composition is skewed to basic residues; it reads WPQKHTGRARH.

This sequence belongs to the universal ribosomal protein uL4 family. Part of the 50S ribosomal subunit.

Its function is as follows. One of the primary rRNA binding proteins, this protein initially binds near the 5'-end of the 23S rRNA. It is important during the early stages of 50S assembly. It makes multiple contacts with different domains of the 23S rRNA in the assembled 50S subunit and ribosome. Functionally, forms part of the polypeptide exit tunnel. The protein is Large ribosomal subunit protein uL4 of Thermotoga petrophila (strain ATCC BAA-488 / DSM 13995 / JCM 10881 / RKU-1).